The following is a 433-amino-acid chain: DNA polymerase processivity factor (433 aa).

Positions R274–G433 are disordered. Residues S298 to G307 are compositionally biased toward low complexity. 2 stretches are compositionally biased toward gly residues: residues G325–G336 and G344–G359. A compositionally biased stretch (basic and acidic residues) spans G360–K376. The segment covering G385–L398 has biased composition (gly residues).

The protein belongs to the herpesviridae polymerase accessory protein family. As to quaternary structure, forms homodimers. Interacts with host SMARCB1. Interacts with host NCL/nucleolin; this interaction is important for the organization of proteins within viral replication compartments. Interacts with UL112/UL113; this interaction is necessary for efficient viral DNA replication. Interacts with UL84. Interacts with the uracil DNA glycosylase UL114. Interacts with the DNA polymerase catalytic subunit UL54. Interacts with host IRF3. Interacts with host RELA. In terms of processing, phosphorylated by UL97 on serine residues, phosphorylation seems important for UL44 nuclear entry but does not directly affect its role in replication. Post-translationally, sumoylated. Sumoylation on Lys-410 increases viral DNA replication.

The protein localises to the virion. The protein resides in the host nucleus. In terms of biological role, accessory subunit of the DNA polymerase that plays an essential role in viral DNA replication and acts by increasing the processivity of polymerization. Forms dimers that binds to double-stranded DNA and UL54 specifically to stimulates long chain DNA synthesis efficiently. Plays an important role in maintaining the structure of viral replication compartments by interacting with host nucleolin/NUC. In addition, suppresses innate immune responses through effects on host IRF3 and NF-kappa-B. Mechanistically, interfere with the binding of IRF3 and the p65 NF-kappa-B subunit to the promoters of antiviral genes, thereby inhibiting the expression of these genes. This Human cytomegalovirus (strain Merlin) (HHV-5) protein is DNA polymerase processivity factor (UL44).